The sequence spans 493 residues: Glutamyl-tRNA(Gln) amidotransferase subunit A (493 aa).

Residues lysine 78 and serine 158 each act as charge relay system in the active site. Serine 182 serves as the catalytic Acyl-ester intermediate.

The protein belongs to the amidase family. GatA subfamily. In terms of assembly, heterotrimer of A, B and C subunits.

It carries out the reaction L-glutamyl-tRNA(Gln) + L-glutamine + ATP + H2O = L-glutaminyl-tRNA(Gln) + L-glutamate + ADP + phosphate + H(+). Functionally, allows the formation of correctly charged Gln-tRNA(Gln) through the transamidation of misacylated Glu-tRNA(Gln) in organisms which lack glutaminyl-tRNA synthetase. The reaction takes place in the presence of glutamine and ATP through an activated gamma-phospho-Glu-tRNA(Gln). The polypeptide is Glutamyl-tRNA(Gln) amidotransferase subunit A (Rickettsia bellii (strain RML369-C)).